The primary structure comprises 151 residues: FAD synthase (151 aa).

ATP contacts are provided by residues Thr9–Phe10, His14–His17, Asp96, and Tyr123.

It belongs to the archaeal FAD synthase family. In terms of assembly, homodimer. A divalent metal cation is required as a cofactor.

It catalyses the reaction FMN + ATP + H(+) = FAD + diphosphate. It functions in the pathway cofactor biosynthesis; FAD biosynthesis; FAD from FMN: step 1/1. Functionally, catalyzes the transfer of the AMP portion of ATP to flavin mononucleotide (FMN) to produce flavin adenine dinucleotide (FAD) coenzyme. The sequence is that of FAD synthase from Methanothermobacter thermautotrophicus (strain ATCC 29096 / DSM 1053 / JCM 10044 / NBRC 100330 / Delta H) (Methanobacterium thermoautotrophicum).